The sequence spans 294 residues: Tryptophan 2,3-dioxygenase 1 (294 aa).

Residues 1–20 are disordered; the sequence is MSEPIQPTRPAASGCPMHGA. Substrate-binding positions include 63–67, Tyr-125, and Arg-129; that span reads FIVQH. Residue His-252 coordinates heme. Residue Thr-266 participates in substrate binding.

This sequence belongs to the tryptophan 2,3-dioxygenase family. As to quaternary structure, homotetramer. Requires heme as cofactor.

It carries out the reaction L-tryptophan + O2 = N-formyl-L-kynurenine. It participates in amino-acid degradation; L-tryptophan degradation via kynurenine pathway; L-kynurenine from L-tryptophan: step 1/2. Functionally, heme-dependent dioxygenase that catalyzes the oxidative cleavage of the L-tryptophan (L-Trp) pyrrole ring and converts L-tryptophan to N-formyl-L-kynurenine. Catalyzes the oxidative cleavage of the indole moiety. The sequence is that of Tryptophan 2,3-dioxygenase 1 from Ralstonia nicotianae (strain ATCC BAA-1114 / GMI1000) (Ralstonia solanacearum).